The following is a 428-amino-acid chain: 5-methylthioadenosine/S-adenosylhomocysteine deaminase (428 aa).

Zn(2+)-binding residues include histidine 65 and histidine 67. Substrate-binding residues include glutamate 94, arginine 158, and histidine 184. Histidine 211 lines the Zn(2+) pocket. Substrate contacts are provided by glutamate 214 and aspartate 299. Aspartate 299 is a binding site for Zn(2+).

This sequence belongs to the metallo-dependent hydrolases superfamily. MTA/SAH deaminase family. Zn(2+) is required as a cofactor.

The enzyme catalyses S-adenosyl-L-homocysteine + H2O + H(+) = S-inosyl-L-homocysteine + NH4(+). The catalysed reaction is S-methyl-5'-thioadenosine + H2O + H(+) = S-methyl-5'-thioinosine + NH4(+). Its function is as follows. Catalyzes the deamination of 5-methylthioadenosine and S-adenosyl-L-homocysteine into 5-methylthioinosine and S-inosyl-L-homocysteine, respectively. Is also able to deaminate adenosine. This is 5-methylthioadenosine/S-adenosylhomocysteine deaminase from Moorella thermoacetica (strain ATCC 39073 / JCM 9320).